Consider the following 363-residue polypeptide: Capsid protein (363 aa).

Residues Lys72–Ile111 adopt a coiled-coil conformation. Residues Leu122–Ser144 form a disordered region.

The protein resides in the virion. This chain is Capsid protein, found in Citrus leaf blotch virus (isolate Nagami kumquat/France/SRA-153/1984) (CLBV).